Here is a 365-residue protein sequence, read N- to C-terminus: Geissoschizine synthase (365 aa).

Cys51 serves as a coordination point for Zn(2+). An NADP(+)-binding site is contributed by Asn52. Zn(2+)-binding residues include His73, Glu74, Cys104, Cys107, Cys110, Cys118, and Cys169. NADP(+) is bound by residues Leu195, Gly197, Leu198, Ser217, Thr218, Ser219, Lys222, Arg262, Val281, Ala283, Ser305, Thr307, and Arg352.

It belongs to the zinc-containing alcohol dehydrogenase family. Class-III subfamily. Homodimer. It depends on Zn(2+) as a cofactor. Mainly expressed in roots and, to a lower level, in leaves.

The catalysed reaction is (19E)-geissoschizine + NADP(+) = 4,21-dehydrogeissoschizine + NADPH. Its pathway is alkaloid biosynthesis; ajmaline biosynthesis. In terms of biological role, alcohol dehydrogenase involved in the biosynthesis of ajmaline-type monoterpenoid indole alkaloids (MIAs) natural products, important plant-derived pharmaceuticals used in the therapy of heart disorders. Catalyzes iminium reduction on 4,21-dehydrogeissoschizine to produce 19E-geissoschizine, precursor of vomilenine, an intermediate chemical in the biosynthesis of ajmaline. The chain is Geissoschizine synthase from Rauvolfia serpentina (Serpentine wood).